Reading from the N-terminus, the 525-residue chain is GMP synthase [glutamine-hydrolyzing] (525 aa).

One can recognise a Glutamine amidotransferase type-1 domain in the interval 8–207 (KILILDFGSQ…ALEICACAAN (200 aa)). Catalysis depends on C85, which acts as the Nucleophile. Active-site residues include H181 and E183. The GMPS ATP-PPase domain occupies 208–400 (WKPASIIEDA…LGLPYNMLYR (193 aa)). Residue 235-241 (SGGVDSS) participates in ATP binding.

As to quaternary structure, homodimer.

The enzyme catalyses XMP + L-glutamine + ATP + H2O = GMP + L-glutamate + AMP + diphosphate + 2 H(+). The protein operates within purine metabolism; GMP biosynthesis; GMP from XMP (L-Gln route): step 1/1. Catalyzes the synthesis of GMP from XMP. This chain is GMP synthase [glutamine-hydrolyzing], found in Shewanella halifaxensis (strain HAW-EB4).